The chain runs to 244 residues: Homeobox-leucine zipper protein HOX14 (244 aa).

Positions 25–64 (ASGEVQGERPRARRRRRRGARCVGGGGGGGEVDGGDPKKR) are disordered. Residues 35–44 (RARRRRRRGA) are compositionally biased toward basic residues. Positions 46–56 (CVGGGGGGGEV) are enriched in gly residues. A DNA-binding region (homeobox) is located at residues 59–118 (GDPKKRRLSDEQVEMLELSFREERKLETGRKVHLASELGLDPKQVAVWFQNRRARHKSKL). Positions 108 to 167 (QNRRARHKSKLLEEEFSKLKHAHDAAILHKCHLENEVLRLKERLVVAEEEVRRLRSAAGS) form a coiled coil.

It belongs to the HD-ZIP homeobox family. Class I subfamily. In terms of tissue distribution, expressed in roots, stems, leaf blades and panicles.

It localises to the nucleus. In terms of biological role, probable transcription factor. This chain is Homeobox-leucine zipper protein HOX14 (HOX14), found in Oryza sativa subsp. indica (Rice).